Reading from the N-terminus, the 70-residue chain is Small ribosomal subunit protein bS21C (70 aa).

Belongs to the bacterial ribosomal protein bS21 family.

The sequence is that of Small ribosomal subunit protein bS21C from Burkholderia pseudomallei (strain 1710b).